The sequence spans 347 residues: N-acetyl-gamma-glutamyl-phosphate reductase (347 aa).

The active site involves Cys150.

This sequence belongs to the NAGSA dehydrogenase family. Type 1 subfamily.

The protein localises to the cytoplasm. It carries out the reaction N-acetyl-L-glutamate 5-semialdehyde + phosphate + NADP(+) = N-acetyl-L-glutamyl 5-phosphate + NADPH + H(+). It participates in amino-acid biosynthesis; L-arginine biosynthesis; N(2)-acetyl-L-ornithine from L-glutamate: step 3/4. Its function is as follows. Catalyzes the NADPH-dependent reduction of N-acetyl-5-glutamyl phosphate to yield N-acetyl-L-glutamate 5-semialdehyde. This is N-acetyl-gamma-glutamyl-phosphate reductase from Halothermothrix orenii (strain H 168 / OCM 544 / DSM 9562).